Consider the following 313-residue polypeptide: D-alanine--D-alanine ligase (313 aa).

One can recognise an ATP-grasp domain in the interval 104–304 (KQALVPHGIP…YSDLVEAIIA (201 aa)). 130-187 (PLPRPYVLKPVNEGSSVGVAIVTAEGNYGSPISAASKGPWQEFDQLLAEPFIRGRELT) contacts ATP. The Mg(2+) site is built by Asp-255, Glu-271, and Asn-273.

It belongs to the D-alanine--D-alanine ligase family. Requires Mg(2+) as cofactor. The cofactor is Mn(2+).

It is found in the cytoplasm. It carries out the reaction 2 D-alanine + ATP = D-alanyl-D-alanine + ADP + phosphate + H(+). It functions in the pathway cell wall biogenesis; peptidoglycan biosynthesis. Functionally, cell wall formation. In Novosphingobium aromaticivorans (strain ATCC 700278 / DSM 12444 / CCUG 56034 / CIP 105152 / NBRC 16084 / F199), this protein is D-alanine--D-alanine ligase.